A 97-amino-acid polypeptide reads, in one-letter code: YcgL domain-containing protein APP7_0754 (97 aa).

Residues 6–90 (NLCAIYKSPK…PPENLLKTFL (85 aa)) form the YcgL domain.

This Actinobacillus pleuropneumoniae serotype 7 (strain AP76) protein is YcgL domain-containing protein APP7_0754.